The chain runs to 186 residues: MARKKKTRRITDIMPIRKADKKIDITKARSGKKLTRYELDAKAREDKKKRKHKGLASGSRHSAVEEKANKLQNEIKDPKIGSKKKIPLVVEFVNKPEKGQVIPVIKQVKKQDPMKELENLENNEILNELLDALDAGKTISKSDQQFVDECLDRISELMEELGIEDEDESEDDLYRTFERMDINQFR.

The disordered stretch occupies residues 39-77 (LDAKAREDKKKRKHKGLASGSRHSAVEEKANKLQNEIKD). Basic and acidic residues predominate over residues 62–77 (SAVEEKANKLQNEIKD).

It belongs to the YihI family. Interacts with Der.

Its function is as follows. A GTPase-activating protein (GAP) that modifies Der/EngA GTPase function. May play a role in ribosome biogenesis. This Haemophilus influenzae (strain 86-028NP) protein is Der GTPase-activating protein YihI.